Reading from the N-terminus, the 282-residue chain is 5'-nucleotidase SurE (282 aa).

4 residues coordinate a divalent metal cation: D12, D13, S43, and N98.

The protein belongs to the SurE nucleotidase family. A divalent metal cation serves as cofactor.

Its subcellular location is the cytoplasm. The enzyme catalyses a ribonucleoside 5'-phosphate + H2O = a ribonucleoside + phosphate. Its function is as follows. Nucleotidase that shows phosphatase activity on nucleoside 5'-monophosphates. The protein is 5'-nucleotidase SurE of Hyperthermus butylicus (strain DSM 5456 / JCM 9403 / PLM1-5).